The primary structure comprises 349 residues: Isopentenyl-diphosphate delta-isomerase (349 aa).

9–10 (RK) is a substrate binding site. FMN is bound by residues 65-67 (AMT), Ser-95, and Asn-124. A substrate-binding site is contributed by 95–97 (STH). A substrate-binding site is contributed by Gln-154. A Mg(2+)-binding site is contributed by Glu-155. Residues Lys-186, Ser-211, Thr-216, 262 to 264 (GLR), and 283 to 284 (SR) contribute to the FMN site.

Belongs to the IPP isomerase type 2 family. Homooctamer. Dimer of tetramers. FMN serves as cofactor. Requires NADPH as cofactor. It depends on Mg(2+) as a cofactor.

It is found in the cytoplasm. The catalysed reaction is isopentenyl diphosphate = dimethylallyl diphosphate. Involved in the biosynthesis of isoprenoids. Catalyzes the 1,3-allylic rearrangement of the homoallylic substrate isopentenyl (IPP) to its allylic isomer, dimethylallyl diphosphate (DMAPP). The sequence is that of Isopentenyl-diphosphate delta-isomerase from Staphylococcus aureus (strain MSSA476).